Reading from the N-terminus, the 157-residue chain is 1,4-dihydroxy-2-naphthoyl-CoA thioesterase 2 (157 aa).

E56 is an active-site residue. The Microbody targeting signal motif lies at 154-156 (ISK).

The protein belongs to the 4-hydroxybenzoyl-CoA thioesterase family. DHNA-CoA hydrolase subfamily. As to quaternary structure, homotetramers.

It localises to the peroxisome. Its pathway is cofactor biosynthesis; phylloquinone biosynthesis. It functions in the pathway quinol/quinone metabolism; 1,4-dihydroxy-2-naphthoate biosynthesis; 1,4-dihydroxy-2-naphthoate from chorismate: step 7/7. Functionally, catalyzes the hydrolysis of the thioester bond of 1,4-dihydroxy-2-naphthoyl-CoA (DHNA-CoA) in peroxisomes, a necessary step to form the naphthoquinone ring of phylloquinone (vitamin K(1)). Displayed also slight thioesterase activity towards benzoyl-CoA. Is not active on phenylacetyl-CoA, succinyl-CoA and palmitoyl-CoA thioesters. The chain is 1,4-dihydroxy-2-naphthoyl-CoA thioesterase 2 from Arabidopsis thaliana (Mouse-ear cress).